Reading from the N-terminus, the 540-residue chain is Zinc finger CCCH domain-containing protein 46 (540 aa).

Residues 148–175 (GFGGVPCSYFARGFCKNGASCRFVHSDG) form a C3H1-type zinc finger. The region spanning 258-334 (RQIYLTFPAD…RVLVKPYKEK (77 aa)) is the RRM domain. Composition is skewed to basic and acidic residues over residues 337–351 (VPDK…EREL) and 436–450 (EYDG…SKEG). Disordered stretches follow at residues 337–365 (VPDK…DVLG), 436–469 (EYDG…LPDS), and 490–514 (SDLW…SFNS). Serine 451 is subject to Phosphoserine. Low complexity predominate over residues 490–511 (SDLWSPSSDNDDNSTPSTLSDS).

Its function is as follows. Possesses RNA-binding and ribonuclease activities in vitro. This chain is Zinc finger CCCH domain-containing protein 46, found in Arabidopsis thaliana (Mouse-ear cress).